Consider the following 181-residue polypeptide: Capsid protein VP4 (181 aa).

Its subcellular location is the virion. In terms of biological role, VP4 self-assembles to form, together with capsid protein VP10, an icosahedral caspid of 87 nm in diameter, with a T=43 symmetry and composed of 420 hexamers and 12 pentamers. VP4 proteins arrange into hexons, while VP10 proteins form the pentameric densities located at the 5-fold axes in the virion. The stoichiometry of VP4:VP10 is 42:1. The sequence is that of Capsid protein VP4 from Sulfolobus (SPV1).